Consider the following 548-residue polypeptide: Chaperonin GroEL (548 aa).

ATP-binding positions include 30-33, Lys51, 87-91, Gly415, 479-481, and Asp495; these read TLGP, DGTTT, and NAA. The tract at residues 524–548 is disordered; that stretch reads LPKEDKSSDSNSSPAGGMGGMGGMM. A compositionally biased stretch (gly residues) spans 539-548; that stretch reads GGMGGMGGMM.

It belongs to the chaperonin (HSP60) family. As to quaternary structure, forms a cylinder of 14 subunits composed of two heptameric rings stacked back-to-back. Interacts with the co-chaperonin GroES.

The protein localises to the cytoplasm. The catalysed reaction is ATP + H2O + a folded polypeptide = ADP + phosphate + an unfolded polypeptide.. Together with its co-chaperonin GroES, plays an essential role in assisting protein folding. The GroEL-GroES system forms a nano-cage that allows encapsulation of the non-native substrate proteins and provides a physical environment optimized to promote and accelerate protein folding. This chain is Chaperonin GroEL, found in Buchnera aphidicola subsp. Myzus persicae (Myzus persicae primary endosymbiont).